Consider the following 215-residue polypeptide: Cytochrome b6 (215 aa).

A helical transmembrane segment spans residues 32-52; sequence IFYCLGGIVFVSFLIQVATGF. Cys-35 contacts heme c. The heme b site is built by His-86 and His-100. Transmembrane regions (helical) follow at residues 90–110, 116–136, and 186–206; these read VSMMVLMMILHVFRVYLTGGF, LTWVTGVILGVLTVSFGVTGY, and LHTFVLPLLTAVFMLMHFLMI. Heme b is bound by residues His-187 and His-202.

The protein belongs to the cytochrome b family. PetB subfamily. In terms of assembly, the 4 large subunits of the cytochrome b6-f complex are cytochrome b6, subunit IV (17 kDa polypeptide, PetD), cytochrome f and the Rieske protein, while the 4 small subunits are PetG, PetL, PetM and PetN. The complex functions as a dimer. Heme b is required as a cofactor. The cofactor is heme c.

It localises to the plastid. The protein resides in the chloroplast thylakoid membrane. In terms of biological role, component of the cytochrome b6-f complex, which mediates electron transfer between photosystem II (PSII) and photosystem I (PSI), cyclic electron flow around PSI, and state transitions. The protein is Cytochrome b6 of Pyropia yezoensis (Susabi-nori).